The primary structure comprises 238 residues: Thrombin-like enzyme collinein-1 (238 aa).

Positions 1–229 (VIGGDECNIN…HLDWIQNIIA (229 aa)) constitute a Peptidase S1 domain. Intrachain disulfides connect Cys-7–Cys-141, Cys-28–Cys-44, Cys-78–Cys-236, Cys-120–Cys-190, Cys-152–Cys-169, and Cys-180–Cys-205. Active-site charge relay system residues include His-43 and Asp-88. Ser-184 acts as the Charge relay system in catalysis.

The protein belongs to the peptidase S1 family. Snake venom subfamily. In terms of assembly, monomer. Expressed by the venom gland.

Its subcellular location is the secreted. Its activity is regulated as follows. Inhibited by Cu(2+) and, to a lesser extent, by Zn(2+) and Ba(2+). Not inhibited by Ca(2+) and Mg(2+). Thrombin-like snake venom serine protease. Releases fibrinopeptide A and B in the conversion of fibrinogen to fibrin, with preferential activity on the alpha chain of fibrinogen. Also hydrolyzes N-p-toluensulfonyl arginine ester (TAME) and chromogenic artificial substrates of the blood coagulation cascade: S-2222 for factor Xa, S-2302 for kallikrein and S-2238 for thrombin. When tested in vitro, the recombinant protein does not degrade blood clots, suggesting that this toxin lacks fibrinolytic activity. In addition, it moderately inhibits human Kv10.1/KCNH1/EAG1 currents, with a mechanism independent of its enzymatic activity. It selectively blocks Kv10.1/KCNH1/EAG1 in a time and dose-dependent manner (IC(50)=4.2 uM for native protein and IC(50)=2.5 uM for recombinant protein). It may have a preference in interacting with Kv10.1/KCNH1/EAG1 in its closed state, since the inhibitory effect of the toxin is decreased at more depolarized potentials. Corroboratively, it may have possible antitumor applications, since it reduces the viability of human breast cancer cell line MCF-7, which strongly expresses Kv10.1/KCNH1/EAG1, but does not affect the liver carcinoma and the non-tumorigenic epithelial breast cell lines, which weakly express Kv10.1/KCNH1/EAG1. When tested on peripheral blood mononuclear cells (PBMC), the native protein shows mild cytotoxicity, whereas the recombinant protein does not show any cytotoxicity. Native form is not immununogenic, since it does not induce statistically significant antibody production in mice, whereas recombinant form shows an antibody titer slightly higher than the native form. In vivo, subplantar injection in mice paw induces a discreet paw edema. In addition, intraperitoneal injection of the recombinant protein into mice led to fibrinogen depletion, resulting in the blood incoagulability. In Crotalus durissus collilineatus (Brazilian rattlesnake), this protein is Thrombin-like enzyme collinein-1.